The sequence spans 233 residues: Large ribosomal subunit protein uL3 (233 aa).

Residues 146-171 (GSQRASHGNSRSHRVPGSIGQAQDPG) are disordered. The residue at position 168 (Gln168) is an N5-methylglutamine.

This sequence belongs to the universal ribosomal protein uL3 family. In terms of assembly, part of the 50S ribosomal subunit. Forms a cluster with proteins L14 and L19. Methylated by PrmB.

Its function is as follows. One of the primary rRNA binding proteins, it binds directly near the 3'-end of the 23S rRNA, where it nucleates assembly of the 50S subunit. The sequence is that of Large ribosomal subunit protein uL3 from Bordetella bronchiseptica (strain ATCC BAA-588 / NCTC 13252 / RB50) (Alcaligenes bronchisepticus).